Consider the following 880-residue polypeptide: Alanine--tRNA ligase (880 aa).

Zn(2+) is bound by residues His-568, His-572, Cys-670, and His-674.

This sequence belongs to the class-II aminoacyl-tRNA synthetase family. Zn(2+) serves as cofactor.

The protein resides in the cytoplasm. It carries out the reaction tRNA(Ala) + L-alanine + ATP = L-alanyl-tRNA(Ala) + AMP + diphosphate. In terms of biological role, catalyzes the attachment of alanine to tRNA(Ala) in a two-step reaction: alanine is first activated by ATP to form Ala-AMP and then transferred to the acceptor end of tRNA(Ala). Also edits incorrectly charged Ser-tRNA(Ala) and Gly-tRNA(Ala) via its editing domain. The protein is Alanine--tRNA ligase of Enterococcus faecalis (strain ATCC 700802 / V583).